The following is a 157-amino-acid chain: MSAKNKSNNKTLAENRKARHDYFIEESMEAGIQLVGTEVKSIRAGKSNLKDSYGEIINGEIFIRNMHISPYEKGNIFNRDPLRDRKLLLHKKEIARLLGYTAQQGYTIVPLSLYLKNGRVKVNLAVAKGKKNYDKRDSMLEKAAKRDIERQMKERFR.

It belongs to the SmpB family.

The protein localises to the cytoplasm. Required for rescue of stalled ribosomes mediated by trans-translation. Binds to transfer-messenger RNA (tmRNA), required for stable association of tmRNA with ribosomes. tmRNA and SmpB together mimic tRNA shape, replacing the anticodon stem-loop with SmpB. tmRNA is encoded by the ssrA gene; the 2 termini fold to resemble tRNA(Ala) and it encodes a 'tag peptide', a short internal open reading frame. During trans-translation Ala-aminoacylated tmRNA acts like a tRNA, entering the A-site of stalled ribosomes, displacing the stalled mRNA. The ribosome then switches to translate the ORF on the tmRNA; the nascent peptide is terminated with the 'tag peptide' encoded by the tmRNA and targeted for degradation. The ribosome is freed to recommence translation, which seems to be the essential function of trans-translation. The protein is SsrA-binding protein of Clostridium kluyveri (strain NBRC 12016).